The sequence spans 161 residues: Allophycocyanin alpha subunit (161 aa).

Cys81 serves as a coordination point for (2R,3E)-phycocyanobilin.

The protein belongs to the phycobiliprotein family. As to quaternary structure, heterodimer of an alpha and a beta chain. Contains one covalently linked phycocyanobilin chromophore. The chromophore on position 81 is added by the phycocyanobilin lyase CpcUS.

It localises to the cellular thylakoid membrane. Functionally, light-harvesting photosynthetic bile pigment-protein from the phycobiliprotein complex. Allophycocyanin has a maximum absorption at approximately 650 nanometers. The sequence is that of Allophycocyanin alpha subunit (apcA) from Picosynechococcus sp. (strain ATCC 27264 / PCC 7002 / PR-6) (Agmenellum quadruplicatum).